The chain runs to 103 residues: A-type ATP synthase subunit F (103 aa).

It belongs to the V-ATPase F subunit family. In terms of assembly, has multiple subunits with at least A(3), B(3), C, D, E, F, H, I and proteolipid K(x).

The protein localises to the cell membrane. In terms of biological role, component of the A-type ATP synthase that produces ATP from ADP in the presence of a proton gradient across the membrane. This Pyrococcus furiosus (strain ATCC 43587 / DSM 3638 / JCM 8422 / Vc1) protein is A-type ATP synthase subunit F.